A 77-amino-acid polypeptide reads, in one-letter code: UPF0213 protein VNG_2274C (77 aa).

A GIY-YIG domain is found at 1–75 (MHHVYVIECS…KQLSRAQKEA (75 aa)).

It belongs to the UPF0213 family.

In Halobacterium salinarum (strain ATCC 700922 / JCM 11081 / NRC-1) (Halobacterium halobium), this protein is UPF0213 protein VNG_2274C.